The following is a 479-amino-acid chain: Ribulose bisphosphate carboxylase large chain (479 aa).

The propeptide occupies 1–2; the sequence is MS. Residues asparagine 123 and threonine 173 each coordinate substrate. Residue lysine 175 is the Proton acceptor of the active site. Lysine 177 is a binding site for substrate. Lysine 201, aspartate 203, and glutamate 204 together coordinate Mg(2+). N6-carboxylysine is present on lysine 201. Serine 208 is modified (phosphoserine). Catalysis depends on histidine 294, which acts as the Proton acceptor. Residues arginine 295 and histidine 327 each contribute to the substrate site. Threonine 330 carries the post-translational modification Phosphothreonine. Serine 379 contributes to the substrate binding site.

It belongs to the RuBisCO large chain family. Type I subfamily. In terms of assembly, heterohexadecamer of 8 large chains and 8 small chains; disulfide-linked. The disulfide link is formed within the large subunit homodimers. Requires Mg(2+) as cofactor. In terms of processing, the disulfide bond which can form in the large chain dimeric partners within the hexadecamer appears to be associated with oxidative stress and protein turnover.

The protein resides in the plastid. The protein localises to the chloroplast. The catalysed reaction is 2 (2R)-3-phosphoglycerate + 2 H(+) = D-ribulose 1,5-bisphosphate + CO2 + H2O. It catalyses the reaction D-ribulose 1,5-bisphosphate + O2 = 2-phosphoglycolate + (2R)-3-phosphoglycerate + 2 H(+). In terms of biological role, ruBisCO catalyzes two reactions: the carboxylation of D-ribulose 1,5-bisphosphate, the primary event in carbon dioxide fixation, as well as the oxidative fragmentation of the pentose substrate in the photorespiration process. Both reactions occur simultaneously and in competition at the same active site. The polypeptide is Ribulose bisphosphate carboxylase large chain (Lobularia maritima (Sweet alyssum)).